We begin with the raw amino-acid sequence, 258 residues long: Aspartate/glutamate leucyltransferase (258 aa).

This sequence belongs to the R-transferase family. Bpt subfamily.

Its subcellular location is the cytoplasm. The catalysed reaction is N-terminal L-glutamyl-[protein] + L-leucyl-tRNA(Leu) = N-terminal L-leucyl-L-glutamyl-[protein] + tRNA(Leu) + H(+). The enzyme catalyses N-terminal L-aspartyl-[protein] + L-leucyl-tRNA(Leu) = N-terminal L-leucyl-L-aspartyl-[protein] + tRNA(Leu) + H(+). Functionally, functions in the N-end rule pathway of protein degradation where it conjugates Leu from its aminoacyl-tRNA to the N-termini of proteins containing an N-terminal aspartate or glutamate. The protein is Aspartate/glutamate leucyltransferase of Rhodopseudomonas palustris (strain ATCC BAA-98 / CGA009).